We begin with the raw amino-acid sequence, 184 residues long: Protein GrpE (184 aa).

Residues 1–10 show a composition bias toward acidic residues; it reads MTDTPPENEE. The segment at 1–22 is disordered; sequence MTDTPPENEEQHESNVQNENEV.

This sequence belongs to the GrpE family. As to quaternary structure, homodimer.

It is found in the cytoplasm. In terms of biological role, participates actively in the response to hyperosmotic and heat shock by preventing the aggregation of stress-denatured proteins, in association with DnaK and GrpE. It is the nucleotide exchange factor for DnaK and may function as a thermosensor. Unfolded proteins bind initially to DnaJ; upon interaction with the DnaJ-bound protein, DnaK hydrolyzes its bound ATP, resulting in the formation of a stable complex. GrpE releases ADP from DnaK; ATP binding to DnaK triggers the release of the substrate protein, thus completing the reaction cycle. Several rounds of ATP-dependent interactions between DnaJ, DnaK and GrpE are required for fully efficient folding. The protein is Protein GrpE of Chlamydia pneumoniae (Chlamydophila pneumoniae).